The sequence spans 1292 residues: DNA-directed RNA polymerase subunit beta' (1292 aa).

Cys-70, Cys-72, Cys-85, and Cys-88 together coordinate Zn(2+). Mg(2+) contacts are provided by Asp-532, Asp-534, and Asp-536. The Zn(2+) site is built by Cys-911, Cys-987, Cys-994, and Cys-997.

It belongs to the RNA polymerase beta' chain family. The RNAP catalytic core consists of 2 alpha, 1 beta, 1 beta' and 1 omega subunit. When a sigma factor is associated with the core the holoenzyme is formed, which can initiate transcription. Mg(2+) is required as a cofactor. Requires Zn(2+) as cofactor.

It catalyses the reaction RNA(n) + a ribonucleoside 5'-triphosphate = RNA(n+1) + diphosphate. In terms of biological role, DNA-dependent RNA polymerase catalyzes the transcription of DNA into RNA using the four ribonucleoside triphosphates as substrates. The protein is DNA-directed RNA polymerase subunit beta' of Mycoplasma genitalium (strain ATCC 33530 / DSM 19775 / NCTC 10195 / G37) (Mycoplasmoides genitalium).